The primary structure comprises 334 residues: Probable aminoacyl tRNA synthase complex-interacting multifunctional protein 2 (334 aa).

The GST C-terminal domain occupies 280–327 (LDKRLQKQQYFGGSQMSVADVGVYSSLIRMPAVTEKDLTPALVAWRKR).

In terms of assembly, component of the aminoacyl-tRNA synthase complex which is comprised of a bifunctional glutamyl-prolyl-tRNA synthase, the monospecific isoleucyl, leucyl, glutaminyl, methionyl, lysyl, arginyl and aspartyl-tRNA synthases, and three auxiliary proteins.

The protein localises to the cytoplasm. The protein resides in the cytosol. It is found in the nucleus. Functionally, required for assembly and stability of the aminoacyl-tRNA synthase complex. This chain is Probable aminoacyl tRNA synthase complex-interacting multifunctional protein 2, found in Drosophila melanogaster (Fruit fly).